The chain runs to 236 residues: Syntaxin-8 (236 aa).

Topologically, residues 1 to 215 are cytoplasmic; that stretch reads MAPDPWFSTY…LVDRKSTSCG (215 aa). A coiled-coil region spans residues 42 to 65; sequence LTIRTLLKNLKVKIDLLKDLLLRA. In terms of domain architecture, t-SNARE coiled-coil homology spans 145–207; that stretch reads QKIIQEQDAG…RTEARRVTLV (63 aa). Position 160 is a phosphoserine (S160). Residues 216–232 traverse the membrane as a helical; Anchor for type IV membrane protein segment; it reads MIMVILLLLVAIVVVAV. The Vesicular portion of the chain corresponds to 233 to 236; sequence WPTN.

This sequence belongs to the syntaxin family. As to quaternary structure, forms a SNARE complex with STX7, VTI1B and VAMP8 which functions in the homotypic fusion of late endosomes. Part of the SNARE core complex containing STX7, VAMP8 and VTI1B. Interacts with VAMP8. Interacts with HECTD3. Interacts with TPC1. In terms of processing, ubiquitinated by HECTD3.

It localises to the membrane. Vesicle trafficking protein that functions in the early secretory pathway, possibly by mediating retrograde transport from cis-Golgi membranes to the ER. This Mus musculus (Mouse) protein is Syntaxin-8 (Stx8).